Consider the following 237-residue polypeptide: Endonuclease NucS (237 aa).

It belongs to the NucS endonuclease family.

The protein localises to the cytoplasm. Functionally, cleaves both 3' and 5' ssDNA extremities of branched DNA structures. The chain is Endonuclease NucS from Saccharolobus islandicus (strain L.S.2.15 / Lassen #1) (Sulfolobus islandicus).